Reading from the N-terminus, the 369-residue chain is F-box protein At3g08750 (369 aa).

Residues 6–53 (CLLLPSLPFELIEEILYKIPAESLIRFKSTCKKWYNLITEKRFMYNHL) form the F-box domain.

The chain is F-box protein At3g08750 from Arabidopsis thaliana (Mouse-ear cress).